Consider the following 139-residue polypeptide: Small ribosomal subunit protein bS16 (139 aa).

The interval 85 to 108 (ESKSGKKPAKKATTKEASAKKPTD) is disordered. Residues 97 to 108 (TTKEASAKKPTD) are compositionally biased toward basic and acidic residues.

It belongs to the bacterial ribosomal protein bS16 family.

This chain is Small ribosomal subunit protein bS16, found in Leuconostoc mesenteroides subsp. mesenteroides (strain ATCC 8293 / DSM 20343 / BCRC 11652 / CCM 1803 / JCM 6124 / NCDO 523 / NBRC 100496 / NCIMB 8023 / NCTC 12954 / NRRL B-1118 / 37Y).